The primary structure comprises 24 residues: Humanin-like 12 (24 aa).

This sequence belongs to the humanin family.

The protein resides in the secreted. It localises to the cytoplasm. In terms of biological role, plays a role as a neuroprotective and antiapoptotic factor. The chain is Humanin-like 12 from Homo sapiens (Human).